The primary structure comprises 216 residues: 7-carboxy-7-deazaguanine synthase (216 aa).

Substrate contacts are provided by residues 12-14 (LQG) and R27. Residues 18-216 (RAGRAAVFCR…LQTHKYLGIP (199 aa)) enclose the Radical SAM core domain. The [4Fe-4S] cluster site is built by C31, C46, and C49. T51 provides a ligand contact to Mg(2+). T93 contacts substrate. S-adenosyl-L-methionine-binding positions include G95, 136–138 (SPK), and 176–179 (QPRD). P216 provides a ligand contact to substrate.

Belongs to the radical SAM superfamily. 7-carboxy-7-deazaguanine synthase family. In terms of assembly, homodimer. [4Fe-4S] cluster is required as a cofactor. It depends on S-adenosyl-L-methionine as a cofactor. Mg(2+) serves as cofactor.

The enzyme catalyses 6-carboxy-5,6,7,8-tetrahydropterin + H(+) = 7-carboxy-7-deazaguanine + NH4(+). It functions in the pathway purine metabolism; 7-cyano-7-deazaguanine biosynthesis. In terms of biological role, catalyzes the complex heterocyclic radical-mediated conversion of 6-carboxy-5,6,7,8-tetrahydropterin (CPH4) to 7-carboxy-7-deazaguanine (CDG), a step common to the biosynthetic pathways of all 7-deazapurine-containing compounds. The polypeptide is 7-carboxy-7-deazaguanine synthase (Nitratidesulfovibrio vulgaris (strain ATCC 29579 / DSM 644 / CCUG 34227 / NCIMB 8303 / VKM B-1760 / Hildenborough) (Desulfovibrio vulgaris)).